Reading from the N-terminus, the 89-residue chain is Small ribosomal subunit protein uS15 (89 aa).

Belongs to the universal ribosomal protein uS15 family. Part of the 30S ribosomal subunit. Forms a bridge to the 50S subunit in the 70S ribosome, contacting the 23S rRNA.

One of the primary rRNA binding proteins, it binds directly to 16S rRNA where it helps nucleate assembly of the platform of the 30S subunit by binding and bridging several RNA helices of the 16S rRNA. Its function is as follows. Forms an intersubunit bridge (bridge B4) with the 23S rRNA of the 50S subunit in the ribosome. This chain is Small ribosomal subunit protein uS15, found in Roseiflexus sp. (strain RS-1).